Here is a 494-residue protein sequence, read N- to C-terminus: Aspartyl/glutamyl-tRNA(Asn/Gln) amidotransferase subunit B (494 aa).

This sequence belongs to the GatB/GatE family. GatB subfamily. As to quaternary structure, heterotrimer of A, B and C subunits.

It catalyses the reaction L-glutamyl-tRNA(Gln) + L-glutamine + ATP + H2O = L-glutaminyl-tRNA(Gln) + L-glutamate + ADP + phosphate + H(+). The enzyme catalyses L-aspartyl-tRNA(Asn) + L-glutamine + ATP + H2O = L-asparaginyl-tRNA(Asn) + L-glutamate + ADP + phosphate + 2 H(+). Its function is as follows. Allows the formation of correctly charged Asn-tRNA(Asn) or Gln-tRNA(Gln) through the transamidation of misacylated Asp-tRNA(Asn) or Glu-tRNA(Gln) in organisms which lack either or both of asparaginyl-tRNA or glutaminyl-tRNA synthetases. The reaction takes place in the presence of glutamine and ATP through an activated phospho-Asp-tRNA(Asn) or phospho-Glu-tRNA(Gln). The chain is Aspartyl/glutamyl-tRNA(Asn/Gln) amidotransferase subunit B from Nitrobacter winogradskyi (strain ATCC 25391 / DSM 10237 / CIP 104748 / NCIMB 11846 / Nb-255).